A 422-amino-acid polypeptide reads, in one-letter code: WD repeat and SOCS box-containing protein 1 (422 aa).

WD repeat units follow at residues 124–165, 168–208, 212–251, 254–293, and 309–346; these read SRCV…LLLN, DHTE…NMMK, GHQN…MIRK, GHYN…ILFE, and DNGR…SYPV. Residues 374 to 422 enclose the SOCS box domain; sequence NAYFWSTPKYVSSLQHLCRMAIRRVMNTNEVKKLPIPQKIMEFLTYQTM.

Component of a probable ECS E3 ubiquitin-protein ligase complex that contains the Elongin BC complex.

Its pathway is protein modification; protein ubiquitination. Functionally, probable substrate-recognition component of a SCF-like ECS (Elongin-Cullin-SOCS-box protein) E3 ubiquitin-protein ligase complex which mediates the ubiquitination and subsequent proteasomal degradation of target proteins. The polypeptide is WD repeat and SOCS box-containing protein 1 (wsb1) (Xenopus tropicalis (Western clawed frog)).